The primary structure comprises 346 residues: tRNA (guanine-N(7)-)-methyltransferase (346 aa).

Residues Gly-101 and 124–125 (EI) each bind S-adenosyl-L-methionine. A disordered region spans residues 149–191 (LKSAGGGGSDAAPESPAAPPTPSEAASPDSTTPSEQQAPTTLV). The span at 171–182 (SEAASPDSTTPS) shows a compositional bias: low complexity. S-adenosyl-L-methionine is bound by residues 204–205 (NT) and Cys-224. Asp-227 is an active-site residue. 318–320 (TEE) serves as a coordination point for S-adenosyl-L-methionine.

Belongs to the class I-like SAM-binding methyltransferase superfamily. TrmB family. In terms of assembly, forms a complex with trm82.

The protein resides in the nucleus. The catalysed reaction is guanosine(46) in tRNA + S-adenosyl-L-methionine = N(7)-methylguanosine(46) in tRNA + S-adenosyl-L-homocysteine. Its pathway is tRNA modification; N(7)-methylguanine-tRNA biosynthesis. Catalyzes the formation of N(7)-methylguanine at position 46 (m7G46) in tRNA. The sequence is that of tRNA (guanine-N(7)-)-methyltransferase (trm8) from Aspergillus terreus (strain NIH 2624 / FGSC A1156).